Consider the following 174-residue polypeptide: MQKEVVDSMAMKRALTRITYEIIEQNKGIKNVVLVGVKTRGVYIAQRIAAQLQQLEGTAIPVGELDITAFRDDQPLDQARLSTDYQLTFSVADKRVILVDDVLFTGRTIRAALDALMGGGRPQSIALAVLVDRGHRELPIRADFIGRNIPTARQERIKVTVNEIDGHDGIEIIN.

Residues 39–40 (TR), 100–108 (DDVLFTGRT), and R133 contribute to the substrate site. Positions 96 to 108 (VILVDDVLFTGRT) match the PRPP-binding motif.

Belongs to the purine/pyrimidine phosphoribosyltransferase family. PyrR subfamily. Homodimer and homohexamer; in equilibrium.

It carries out the reaction UMP + diphosphate = 5-phospho-alpha-D-ribose 1-diphosphate + uracil. Functionally, regulates transcriptional attenuation of the pyrimidine nucleotide (pyr) operon by binding in a uridine-dependent manner to specific sites on pyr mRNA. This disrupts an antiterminator hairpin in the RNA and favors formation of a downstream transcription terminator, leading to a reduced expression of downstream genes. Its function is as follows. Also displays a weak uracil phosphoribosyltransferase activity which is not physiologically significant. The protein is Bifunctional protein PyrR 2 (pyrR2) of Lactiplantibacillus plantarum (strain ATCC BAA-793 / NCIMB 8826 / WCFS1) (Lactobacillus plantarum).